A 327-amino-acid chain; its full sequence is Carboxylesterase 20 (327 aa).

The short motif at His87–Gly89 is the Involved in the stabilization of the negatively charged intermediate by the formation of the oxyanion hole element. Ser166 functions as the Nucleophile in the catalytic mechanism. Active-site residues include Asp272 and His302.

The protein belongs to the 'GDXG' lipolytic enzyme family. In terms of tissue distribution, expressed in roots, stems, flowers and siliques.

It catalyses the reaction a carboxylic ester + H2O = an alcohol + a carboxylate + H(+). Esterase activity measured in vitro with the synthetic substrate p-nitrophenyl acetate (pNPA) is inhibited by strigolactone. Functionally, carboxylesterase that possesses esterase activity in vitro with the synthetic substrate p-nitrophenyl acetate (pNPA). Binds strigolactones, but is not able to hydrolyze them. May be involved in the regulation of shoot branching. This is Carboxylesterase 20 from Arabidopsis thaliana (Mouse-ear cress).